The following is a 184-amino-acid chain: ATP synthase subunit b, chloroplastic (184 aa).

The helical transmembrane segment at 31–53 (LINLSVVLGVLIYFGKGVLSNLL) threads the bilayer.

Belongs to the ATPase B chain family. F-type ATPases have 2 components, F(1) - the catalytic core - and F(0) - the membrane proton channel. F(1) has five subunits: alpha(3), beta(3), gamma(1), delta(1), epsilon(1). F(0) has four main subunits: a(1), b(1), b'(1) and c(10-14). The alpha and beta chains form an alternating ring which encloses part of the gamma chain. F(1) is attached to F(0) by a central stalk formed by the gamma and epsilon chains, while a peripheral stalk is formed by the delta, b and b' chains.

It is found in the plastid. Its subcellular location is the chloroplast thylakoid membrane. F(1)F(0) ATP synthase produces ATP from ADP in the presence of a proton or sodium gradient. F-type ATPases consist of two structural domains, F(1) containing the extramembraneous catalytic core and F(0) containing the membrane proton channel, linked together by a central stalk and a peripheral stalk. During catalysis, ATP synthesis in the catalytic domain of F(1) is coupled via a rotary mechanism of the central stalk subunits to proton translocation. Functionally, component of the F(0) channel, it forms part of the peripheral stalk, linking F(1) to F(0). This Cycas taitungensis (Prince sago) protein is ATP synthase subunit b, chloroplastic.